Reading from the N-terminus, the 302-residue chain is ICOS ligand (302 aa).

The first 18 residues, 1–18, serve as a signal peptide directing secretion; the sequence is MRLGSPGLLFLLFSSLRA. The 111-residue stretch at 19-129 folds into the Ig-like V-type domain; it reads DTQEKEVRAM…LGFQEVLSVE (111 aa). Residues 19–256 lie on the Extracellular side of the membrane; sequence DTQEKEVRAM…VSTGEKNAAT (238 aa). The cysteines at positions 37 and 113 are disulfide-linked. Residues asparagine 70, asparagine 137, asparagine 173, asparagine 186, and asparagine 225 are each glycosylated (N-linked (GlcNAc...) asparagine). One can recognise an Ig-like C2-type domain in the interval 141-227; that stretch reads PVVSAPHSPS…ENVLLQQNLT (87 aa). Cysteines 158 and 216 form a disulfide. The chain crosses the membrane as a helical span at residues 257-277; that stretch reads WSILAVLCLLVVVAVAIGWVC. The Cytoplasmic portion of the chain corresponds to 278 to 302; that stretch reads RDRCLQHSYAGAWAVSPETELTGHV.

Belongs to the immunoglobulin superfamily. BTN/MOG family. As to quaternary structure, interacts with CTLA4 (in vitro). As to expression, expressed on peripheral blood B-cells and monocytes, as well as on monocyte-derived dendritic cells (at protein level). In terms of tissue distribution, widely expressed (brain, heart, kidney, liver, lung, pancreas, placenta, skeletal muscle, bone marrow, colon, ovary, prostate, testis, lymph nodes, leukocytes, spleen, thymus and tonsil). Detected only in lymph nodes, leukocytes and spleen. Expressed on activated monocytes and dendritic cells.

The protein localises to the cell membrane. Its function is as follows. Ligand for the T-cell-specific cell surface receptor ICOS. Acts as a costimulatory signal for T-cell proliferation and cytokine secretion. Also induces B-cell proliferation and differentiation into plasma cells. Could play an important role in mediating local tissue responses to inflammatory conditions, as well as in modulating the secondary immune response by co-stimulating memory T-cell function. In endothelial cells, required for proper neutrophil transmigration in response to chemoattractants, such as CXCL8/IL8 or N-formyl-methionyl peptides (fMLP). The polypeptide is ICOS ligand (ICOSLG) (Homo sapiens (Human)).